The primary structure comprises 395 residues: D-alanine--D-alanine ligase (395 aa).

In terms of domain architecture, ATP-grasp spans 172 to 391 (KVVLGAAGIP…YTELITRLIE (220 aa)). 204 to 266 (DAGLTYPLFI…EQGIDGREIE (63 aa)) is a binding site for ATP. Asp-345, Glu-358, and Asn-360 together coordinate Mg(2+).

The protein belongs to the D-alanine--D-alanine ligase family. It depends on Mg(2+) as a cofactor. The cofactor is Mn(2+).

It is found in the cytoplasm. It catalyses the reaction 2 D-alanine + ATP = D-alanyl-D-alanine + ADP + phosphate + H(+). Its pathway is cell wall biogenesis; peptidoglycan biosynthesis. In terms of biological role, cell wall formation. The chain is D-alanine--D-alanine ligase from Bifidobacterium longum subsp. infantis (strain ATCC 15697 / DSM 20088 / JCM 1222 / NCTC 11817 / S12).